Consider the following 458-residue polypeptide: tRNA(Ile)-lysidine synthase (458 aa).

ATP is bound at residue 36–41 (SGGADS).

Belongs to the tRNA(Ile)-lysidine synthase family.

Its subcellular location is the cytoplasm. The enzyme catalyses cytidine(34) in tRNA(Ile2) + L-lysine + ATP = lysidine(34) in tRNA(Ile2) + AMP + diphosphate + H(+). Its function is as follows. Ligates lysine onto the cytidine present at position 34 of the AUA codon-specific tRNA(Ile) that contains the anticodon CAU, in an ATP-dependent manner. Cytidine is converted to lysidine, thus changing the amino acid specificity of the tRNA from methionine to isoleucine. In Protochlamydia amoebophila (strain UWE25), this protein is tRNA(Ile)-lysidine synthase.